The primary structure comprises 433 residues: 23S rRNA (uracil(1939)-C(5))-methyltransferase RlmD (433 aa).

Positions 10-68 (RTTTRQIITVSVNDLDSFGQGVARHNGKTLFIPGLLPQENAEVAVTEDKKQYARAKVVR) constitute a TRAM domain. Residues cysteine 81, cysteine 87, cysteine 90, and cysteine 162 each coordinate [4Fe-4S] cluster. S-adenosyl-L-methionine contacts are provided by glutamine 265, phenylalanine 294, asparagine 299, glutamate 315, asparagine 342, and aspartate 363. Cysteine 389 acts as the Nucleophile in catalysis.

This sequence belongs to the class I-like SAM-binding methyltransferase superfamily. RNA M5U methyltransferase family. RlmD subfamily.

The enzyme catalyses uridine(1939) in 23S rRNA + S-adenosyl-L-methionine = 5-methyluridine(1939) in 23S rRNA + S-adenosyl-L-homocysteine + H(+). Functionally, catalyzes the formation of 5-methyl-uridine at position 1939 (m5U1939) in 23S rRNA. The protein is 23S rRNA (uracil(1939)-C(5))-methyltransferase RlmD of Shigella flexneri serotype 5b (strain 8401).